We begin with the raw amino-acid sequence, 92 residues long: Calitoxin (92 aa).

The first 20 residues, 1–20 (MKTQVLVVLVLCVVFCLAES), serve as a signal peptide directing secretion. The propeptide occupies 21–42 (RNSMTSEERGLVSLMRQRDDIA). Cystine bridges form between cysteine 47-cysteine 86, cysteine 49-cysteine 77, and cysteine 67-cysteine 87.

It belongs to the sea anemone sodium channel inhibitory toxin family. As to expression, expressed both outside and in acontia, a specialised envenomation structure laden with batteries of venom-containing nematocysts found only in the superfamily Metridioidea.

The protein resides in the secreted. It is found in the nematocyst. Functionally, in neuromuscular preparation of crustaceans, the toxin increased neurotransmitter release, causing repetitive firing of the axons. May affect sodium channels (Nav). The polypeptide is Calitoxin (Calliactis polypus (Hermit crab anemone)).